A 537-amino-acid polypeptide reads, in one-letter code: Endoprotease aex-5 (537 aa).

Residues 1–17 form the signal peptide; that stretch reads MKLIFLLLLFGVSPIVC. Positions 18–99 are excised as a propeptide; it reads QDFEDGVFLA…KLQGFRRYKR (82 aa). A Peptidase S8 domain is found at 111 to 413; it reads VWNLTPSLYI…FGLLNAQKLV (303 aa). N129 carries an N-linked (GlcNAc...) asparagine glycan. Active-site charge relay system residues include D139 and H178. An intrachain disulfide couples C286 to C316. S346 serves as the catalytic Charge relay system. N380 carries an N-linked (GlcNAc...) asparagine glycan. Residues 407-537 form the P/Homo B domain; the sequence is LNAQKLVVMA…KMFKVVGTMS (131 aa).

It belongs to the peptidase S8 family. Furin subfamily.

The protein localises to the secreted. Functionally, probable serine endoprotease which cleaves preproteins at paired basic amino acids. May process FMRFamide-like (flp) and neuropeptide-like protein (nlp) neuropeptides. In muscles, involved in neuronal retrograde signaling by regulating presynaptic activity and localization of synaptic vesicle fusion protein unc-13 at the neuromuscular junction (NMJ). Acts in the intestine to regulate anterior body muscle contractions (aBOC) and the expulsion steps during the defecation motor program (DMP). Probably by regulating DMP, required for fatty acid uptake by intestinal cells and therefore regulates the levels of triglycerides in the intestine. Plays a role in locomotion. The protein is Endoprotease aex-5 of Caenorhabditis elegans.